A 184-amino-acid chain; its full sequence is Ribosome maturation factor RimM (184 aa).

Residues 101-180 (DGEFFYCDLV…KITTNNAKTL (80 aa)) enclose the PRC barrel domain.

It belongs to the RimM family. In terms of assembly, binds ribosomal protein uS19.

The protein resides in the cytoplasm. Functionally, an accessory protein needed during the final step in the assembly of 30S ribosomal subunit, possibly for assembly of the head region. Essential for efficient processing of 16S rRNA. May be needed both before and after RbfA during the maturation of 16S rRNA. It has affinity for free ribosomal 30S subunits but not for 70S ribosomes. The polypeptide is Ribosome maturation factor RimM (Helicobacter pylori (strain Shi470)).